A 339-amino-acid polypeptide reads, in one-letter code: Nicotinate-nucleotide--dimethylbenzimidazole phosphoribosyltransferase (339 aa).

Residue Glu306 is the Proton acceptor of the active site.

This sequence belongs to the CobT family.

It catalyses the reaction 5,6-dimethylbenzimidazole + nicotinate beta-D-ribonucleotide = alpha-ribazole 5'-phosphate + nicotinate + H(+). The protein operates within nucleoside biosynthesis; alpha-ribazole biosynthesis; alpha-ribazole from 5,6-dimethylbenzimidazole: step 1/2. Functionally, catalyzes the synthesis of alpha-ribazole-5'-phosphate from nicotinate mononucleotide (NAMN) and 5,6-dimethylbenzimidazole (DMB). This chain is Nicotinate-nucleotide--dimethylbenzimidazole phosphoribosyltransferase, found in Brucella melitensis biotype 1 (strain ATCC 23456 / CCUG 17765 / NCTC 10094 / 16M).